An 88-amino-acid chain; its full sequence is Otospiralin (88 aa).

The N-terminal stretch at 1–21 is a signal peptide; sequence MQACMVPGLALCLLLGSLTEA.

It belongs to the otospiralin family. As to expression, ear specific.

The protein localises to the secreted. Functionally, may be essential for the survival of the neurosensory epithelium of the inner ear. The sequence is that of Otospiralin (OTOS) from Cavia porcellus (Guinea pig).